The sequence spans 470 residues: Acetyl-CoA decarbonylase/synthase complex subunit beta 2 (470 aa).

Positions 190, 193, 279, and 281 each coordinate [Ni-Fe-S] cluster.

This sequence belongs to the CdhC family. In terms of assembly, monomer. The ACDS complex is made up of alpha, epsilon, beta, gamma and delta chains with a probable stoichiometry of (alpha(2)epsilon(2))(4)-beta(8)-(gamma(1)delta(1))(8) (Potential). It depends on [Ni-Fe-S] cluster as a cofactor.

The enzyme catalyses Co(I)-[corrinoid Fe-S protein] + acetyl-CoA + H(+) = methyl-Co(III)-[corrinoid Fe-S protein] + CO + CoA. It functions in the pathway one-carbon metabolism; methanogenesis from acetate. Functionally, part of a complex that catalyzes the reversible cleavage of acetyl-CoA, allowing growth on acetate as sole source of carbon and energy. The alpha-epsilon complex generates CO from CO(2), while the beta subunit (this protein) combines the CO with CoA and a methyl group to form acetyl-CoA. The methyl group, which is incorporated into acetyl-CoA, is transferred to the beta subunit by a corrinoid iron-sulfur protein (the gamma-delta complex). The chain is Acetyl-CoA decarbonylase/synthase complex subunit beta 2 (cdhC2) from Methanosarcina mazei (strain ATCC BAA-159 / DSM 3647 / Goe1 / Go1 / JCM 11833 / OCM 88) (Methanosarcina frisia).